Reading from the N-terminus, the 368-residue chain is Quinolinate synthase (368 aa).

Residues H46 and S63 each coordinate iminosuccinate. Residue C110 coordinates [4Fe-4S] cluster. Iminosuccinate-binding positions include 141–143 (YVN) and S162. C230 provides a ligand contact to [4Fe-4S] cluster. Residues 256-258 (HPE) and T273 each bind iminosuccinate. C320 lines the [4Fe-4S] cluster pocket.

It belongs to the quinolinate synthase family. Type 3 subfamily. As to quaternary structure, homotrimer. [4Fe-4S] cluster is required as a cofactor.

It is found in the cytoplasm. It catalyses the reaction iminosuccinate + dihydroxyacetone phosphate = quinolinate + phosphate + 2 H2O + H(+). It functions in the pathway cofactor biosynthesis; NAD(+) biosynthesis; quinolinate from iminoaspartate: step 1/1. In terms of biological role, catalyzes the condensation of iminoaspartate with dihydroxyacetone phosphate to form quinolinate. In Bacillus subtilis (strain 168), this protein is Quinolinate synthase.